A 457-amino-acid polypeptide reads, in one-letter code: RNA-binding suppressor of PAS kinase protein 1 (457 aa).

The R3H domain maps to 26–88; that stretch reads RIFIIELENS…SCVILFKGEN (63 aa). Disordered regions lie at residues 142–181, 195–291, and 406–457; these read IDGN…IEKE, LNKS…NGGY, and FQGK…KLNI. Positions 145 to 158 are enriched in polar residues; that stretch reads NTRTPNSNLTANSN. A compositionally biased stretch (basic and acidic residues) spans 159–181; it reads KDQKIEIDDKSSTDLEQERIEKE. S198 is modified (phosphoserine). A compositionally biased stretch (low complexity) spans 226-247; the sequence is SNTQTSNGSVSSSSPFNSSVTT. Over residues 248 to 258 the composition is skewed to polar residues; it reads IQVNKPQQQFY. A compositionally biased stretch (basic and acidic residues) spans 418-435; that stretch reads KRSDDSNSNKNEGIRRAS. S435, S439, and S447 each carry phosphoserine. Positions 443 to 457 are enriched in basic and acidic residues; the sequence is RDTDSVEMKFDKLNI.

It is found in the cytoplasm. In Saccharomyces cerevisiae (strain ATCC 204508 / S288c) (Baker's yeast), this protein is RNA-binding suppressor of PAS kinase protein 1 (RBS1).